We begin with the raw amino-acid sequence, 324 residues long: MKKKIWKSSASIEDLIKRSNIISNIRLFFSKKNILEVETPILSRSTVTDVHLTSFETNYISSDNIDELKLWLTTSPEYHMKRLLASESGSIYQICHSFRNKELGRYHNPEFTMLEWYQPFCSMKKFIKEIDIFLQIILKCNKSDKVSYQDLFIDFLKIDPLCANLLELHQISKKLKLDHLTHSENNLNKLIQLLFTLKIEPNIGKEKPLFVYHFPAEQASLAAINLKDPRISERFEIFFKGIELGNGFYELIDVNEQKKRFIRDNKERRSMNLPIRKIDNFFLSALSYGLPPCSGVAIGLDRLIMLILNKKSIHEVIAFPVDRC.

Ser-75–Glu-77 is a binding site for substrate. ATP contacts are provided by residues Arg-99–Lys-101 and Asn-108. A substrate-binding site is contributed by Tyr-117. Glu-243 to Leu-244 is an ATP binding site. Glu-250 is a binding site for substrate. ATP is bound at residue Gly-299.

This sequence belongs to the class-II aminoacyl-tRNA synthetase family. EpmA subfamily. Homodimer.

It carries out the reaction D-beta-lysine + L-lysyl-[protein] + ATP = N(6)-((3R)-3,6-diaminohexanoyl)-L-lysyl-[protein] + AMP + diphosphate + H(+). Functionally, with EpmB is involved in the beta-lysylation step of the post-translational modification of translation elongation factor P (EF-P). Catalyzes the ATP-dependent activation of (R)-beta-lysine produced by EpmB, forming a lysyl-adenylate, from which the beta-lysyl moiety is then transferred to the epsilon-amino group of a conserved specific lysine residue in EF-P. This Buchnera aphidicola subsp. Acyrthosiphon pisum (strain 5A) protein is Elongation factor P--(R)-beta-lysine ligase.